Here is an 86-residue protein sequence, read N- to C-terminus: Small ribosomal subunit protein bS20 (86 aa).

This sequence belongs to the bacterial ribosomal protein bS20 family.

Its function is as follows. Binds directly to 16S ribosomal RNA. The polypeptide is Small ribosomal subunit protein bS20 (Mycolicibacterium vanbaalenii (strain DSM 7251 / JCM 13017 / BCRC 16820 / KCTC 9966 / NRRL B-24157 / PYR-1) (Mycobacterium vanbaalenii)).